A 250-amino-acid chain; its full sequence is Ribosomal RNA-processing protein 15 (250 aa).

The segment covering 1–27 (MGSKHRVDTKDKKRTRKNAEFGREKRN) has biased composition (basic and acidic residues). The tract at residues 1–101 (MGSKHRVDTK…NSKHDDGSTG (101 aa)) is disordered. Acidic residues-rich tracts occupy residues 43-53 (MEGDEAEEDEQ) and 67-83 (EQSD…EDDD). Ser-69 is subject to Phosphoserine.

It belongs to the RRP15 family.

The protein localises to the nucleus. Its subcellular location is the nucleolus. Functionally, constituent of pre-60S ribosomal particles. Required for large subunit rRNA maturation, in particular processing of the 27S pre-rRNA at the A3 and B1 sites to yield 5.8S and 25S rRNA. In Saccharomyces cerevisiae (strain ATCC 204508 / S288c) (Baker's yeast), this protein is Ribosomal RNA-processing protein 15.